Consider the following 488-residue polypeptide: Glycogen synthase (488 aa).

Lys17 is an ADP-alpha-D-glucose binding site.

The protein belongs to the glycosyltransferase 1 family. Bacterial/plant glycogen synthase subfamily.

It carries out the reaction [(1-&gt;4)-alpha-D-glucosyl](n) + ADP-alpha-D-glucose = [(1-&gt;4)-alpha-D-glucosyl](n+1) + ADP + H(+). It participates in glycan biosynthesis; glycogen biosynthesis. Its function is as follows. Synthesizes alpha-1,4-glucan chains using ADP-glucose. The protein is Glycogen synthase of Nitratidesulfovibrio vulgaris (strain DSM 19637 / Miyazaki F) (Desulfovibrio vulgaris).